The chain runs to 93 residues: CRISPR-associated endoribonuclease Cas2 2 (93 aa).

Asp-9 lines the Mg(2+) pocket.

Belongs to the CRISPR-associated endoribonuclease Cas2 protein family. As to quaternary structure, homodimer, forms a heterotetramer with a Cas1 homodimer. It depends on Mg(2+) as a cofactor.

CRISPR (clustered regularly interspaced short palindromic repeat), is an adaptive immune system that provides protection against mobile genetic elements (viruses, transposable elements and conjugative plasmids). CRISPR clusters contain sequences complementary to antecedent mobile elements and target invading nucleic acids. CRISPR clusters are transcribed and processed into CRISPR RNA (crRNA). Functions as a ssRNA-specific endoribonuclease. Involved in the integration of spacer DNA into the CRISPR cassette. The chain is CRISPR-associated endoribonuclease Cas2 2 from Synechocystis sp. (strain ATCC 27184 / PCC 6803 / Kazusa).